Here is a 123-residue protein sequence, read N- to C-terminus: Small ribosomal subunit protein bS16 (123 aa).

Residues 87–123 (AKNNPIKAKPGKRAQERAAEKAQKAADAAAAAADAAE) form a disordered region. Over residues 99 to 110 (RAQERAAEKAQK) the composition is skewed to basic and acidic residues. Over residues 111-123 (AADAAAAAADAAE) the composition is skewed to low complexity.

It belongs to the bacterial ribosomal protein bS16 family.

The polypeptide is Small ribosomal subunit protein bS16 (Rhizobium etli (strain CIAT 652)).